We begin with the raw amino-acid sequence, 256 residues long: Pimeloyl-[acyl-carrier protein] methyl ester esterase (256 aa).

One can recognise an AB hydrolase-1 domain in the interval 15-242; it reads HLVLLHGWGL…AAHAPFISHP (228 aa). Substrate is bound by residues Trp-22, 82–83, and 143–147; these read SL and FLALQ. Residue Ser-82 is the Nucleophile of the active site. Catalysis depends on residues Asp-207 and His-235. His-235 contacts substrate.

It belongs to the AB hydrolase superfamily. Carboxylesterase BioH family. As to quaternary structure, monomer.

The protein resides in the cytoplasm. The catalysed reaction is 6-carboxyhexanoyl-[ACP] methyl ester + H2O = 6-carboxyhexanoyl-[ACP] + methanol + H(+). It functions in the pathway cofactor biosynthesis; biotin biosynthesis. Its function is as follows. The physiological role of BioH is to remove the methyl group introduced by BioC when the pimeloyl moiety is complete. It allows to synthesize pimeloyl-ACP via the fatty acid synthetic pathway through the hydrolysis of the ester bonds of pimeloyl-ACP esters. The chain is Pimeloyl-[acyl-carrier protein] methyl ester esterase from Shigella boydii serotype 18 (strain CDC 3083-94 / BS512).